We begin with the raw amino-acid sequence, 235 residues long: Vinculin (235 aa).

The protein belongs to the vinculin/alpha-catenin family. In terms of assembly, exhibits self-association properties. In terms of processing, phosphorylated on serines, threonines and tyrosines. Post-translationally, acetylated by myristic acid and/or palmitic acid.

It localises to the cell membrane. The protein localises to the cell junction. Its subcellular location is the adherens junction. The protein resides in the focal adhesion. It is found in the cytoplasm. It localises to the cytoskeleton. The protein localises to the sarcolemma. Its subcellular location is the cell projection. The protein resides in the podosome. Its function is as follows. Involved in cell adhesion. May be involved in the attachment of the actin-based microfilaments to the plasma membrane. This Xenopus laevis (African clawed frog) protein is Vinculin (vcl).